A 204-amino-acid chain; its full sequence is High frequency lysogenization protein HflD homolog (204 aa).

This sequence belongs to the HflD family.

Its subcellular location is the cytoplasm. The protein resides in the cell inner membrane. This is High frequency lysogenization protein HflD homolog from Xanthomonas axonopodis pv. citri (strain 306).